A 349-amino-acid chain; its full sequence is Glycerol-1-phosphate dehydrogenase [NAD(P)+] (349 aa).

Residues 95–99 (GKSID) and 117–120 (TSPS) each bind NAD(+). Asp122 serves as a coordination point for substrate. Ser126 is an NAD(+) binding site. Asp169 provides a ligand contact to substrate. 2 residues coordinate Zn(2+): Asp169 and His249. Residue His253 participates in substrate binding. A Zn(2+)-binding site is contributed by His265.

It belongs to the glycerol-1-phosphate dehydrogenase family. Homodimer. Requires Zn(2+) as cofactor.

The protein localises to the cytoplasm. It catalyses the reaction sn-glycerol 1-phosphate + NAD(+) = dihydroxyacetone phosphate + NADH + H(+). The enzyme catalyses sn-glycerol 1-phosphate + NADP(+) = dihydroxyacetone phosphate + NADPH + H(+). It functions in the pathway membrane lipid metabolism; glycerophospholipid metabolism. Its function is as follows. Catalyzes the NAD(P)H-dependent reduction of dihydroxyacetonephosphate (DHAP or glycerone phosphate) to glycerol 1-phosphate (G1P). The G1P thus generated is used as the glycerophosphate backbone of phospholipids in the cellular membranes of Archaea. The chain is Glycerol-1-phosphate dehydrogenase [NAD(P)+] from Hyperthermus butylicus (strain DSM 5456 / JCM 9403 / PLM1-5).